Consider the following 290-residue polypeptide: 30 kDa spicule matrix protein alpha (290 aa).

The N-terminal stretch at 1-20 is a signal peptide; sequence MRGFVYVLVCVLALASFSRA. The C-type lectin domain maps to 92–162; the sequence is ANMYCGQMHP…YTNWERMTAP (71 aa). N-linked (GlcNAc...) asparagine glycosylation is present at Asn-102.

Accumulates exclusively in mineralized tissues.

In terms of biological role, matrix protein of the sea urchin embryo spicule. The function of the matrix proteins is to direct crystal growth in certain orientations and inhibit growth in others. The polypeptide is 30 kDa spicule matrix protein alpha (SM30A) (Strongylocentrotus purpuratus (Purple sea urchin)).